The primary structure comprises 274 residues: 4-hydroxy-3-methylbut-2-enyl diphosphate reductase (274 aa).

Cys12 is a binding site for [4Fe-4S] cluster. Residues His36 and His70 each contribute to the (2E)-4-hydroxy-3-methylbut-2-enyl diphosphate site. The dimethylallyl diphosphate site is built by His36 and His70. Isopentenyl diphosphate is bound by residues His36 and His70. Cys92 is a [4Fe-4S] cluster binding site. His120 serves as a coordination point for (2E)-4-hydroxy-3-methylbut-2-enyl diphosphate. His120 serves as a coordination point for dimethylallyl diphosphate. Position 120 (His120) interacts with isopentenyl diphosphate. The active-site Proton donor is Glu122. Thr158 serves as a coordination point for (2E)-4-hydroxy-3-methylbut-2-enyl diphosphate. Cys186 lines the [4Fe-4S] cluster pocket. (2E)-4-hydroxy-3-methylbut-2-enyl diphosphate-binding residues include Ser214, Ser215, Asn216, and Ser258. Residues Ser214, Ser215, Asn216, and Ser258 each contribute to the dimethylallyl diphosphate site. Ser214, Ser215, Asn216, and Ser258 together coordinate isopentenyl diphosphate.

It belongs to the IspH family. [4Fe-4S] cluster serves as cofactor.

It carries out the reaction isopentenyl diphosphate + 2 oxidized [2Fe-2S]-[ferredoxin] + H2O = (2E)-4-hydroxy-3-methylbut-2-enyl diphosphate + 2 reduced [2Fe-2S]-[ferredoxin] + 2 H(+). The catalysed reaction is dimethylallyl diphosphate + 2 oxidized [2Fe-2S]-[ferredoxin] + H2O = (2E)-4-hydroxy-3-methylbut-2-enyl diphosphate + 2 reduced [2Fe-2S]-[ferredoxin] + 2 H(+). It functions in the pathway isoprenoid biosynthesis; dimethylallyl diphosphate biosynthesis; dimethylallyl diphosphate from (2E)-4-hydroxy-3-methylbutenyl diphosphate: step 1/1. The protein operates within isoprenoid biosynthesis; isopentenyl diphosphate biosynthesis via DXP pathway; isopentenyl diphosphate from 1-deoxy-D-xylulose 5-phosphate: step 6/6. Functionally, catalyzes the conversion of 1-hydroxy-2-methyl-2-(E)-butenyl 4-diphosphate (HMBPP) into a mixture of isopentenyl diphosphate (IPP) and dimethylallyl diphosphate (DMAPP). Acts in the terminal step of the DOXP/MEP pathway for isoprenoid precursor biosynthesis. The polypeptide is 4-hydroxy-3-methylbut-2-enyl diphosphate reductase (Campylobacter concisus (strain 13826)).